A 335-amino-acid polypeptide reads, in one-letter code: Dihydroorotate dehydrogenase (quinone) (335 aa).

Residues 58-62 and threonine 82 contribute to the FMN site; that span reads AGADK. A substrate-binding site is contributed by lysine 62. 107-111 lines the substrate pocket; that stretch reads NRNGF. Positions 135 and 168 each coordinate FMN. Asparagine 168 contributes to the substrate binding site. Serine 171 serves as the catalytic Nucleophile. Asparagine 173 is a substrate binding site. The FMN site is built by lysine 213 and glycine 241. 242–243 provides a ligand contact to substrate; that stretch reads NT. FMN is bound by residues glycine 264, glycine 293, and 314 to 315; that span reads YS.

It belongs to the dihydroorotate dehydrogenase family. Type 2 subfamily. As to quaternary structure, monomer. It depends on FMN as a cofactor.

The protein resides in the cell membrane. It catalyses the reaction (S)-dihydroorotate + a quinone = orotate + a quinol. It functions in the pathway pyrimidine metabolism; UMP biosynthesis via de novo pathway; orotate from (S)-dihydroorotate (quinone route): step 1/1. Functionally, catalyzes the conversion of dihydroorotate to orotate with quinone as electron acceptor. The polypeptide is Dihydroorotate dehydrogenase (quinone) (Actinobacillus pleuropneumoniae serotype 7 (strain AP76)).